A 174-amino-acid polypeptide reads, in one-letter code: RNA pyrophosphohydrolase (174 aa).

The Nudix hydrolase domain occupies 14–167 (PYRPCVGLMV…KRKVYEEVVA (154 aa)). A Nudix box motif is present at residues 55–76 (GGIDKGEEPLEAAIRELYEETG).

The protein belongs to the Nudix hydrolase family. RppH subfamily. A divalent metal cation is required as a cofactor.

In terms of biological role, accelerates the degradation of transcripts by removing pyrophosphate from the 5'-end of triphosphorylated RNA, leading to a more labile monophosphorylated state that can stimulate subsequent ribonuclease cleavage. This chain is RNA pyrophosphohydrolase, found in Brucella anthropi (strain ATCC 49188 / DSM 6882 / CCUG 24695 / JCM 21032 / LMG 3331 / NBRC 15819 / NCTC 12168 / Alc 37) (Ochrobactrum anthropi).